Reading from the N-terminus, the 384-residue chain is Glucose-fructose oxidoreductase domain-containing protein 2 (384 aa).

Positions 1–25 are cleaved as a signal peptide; it reads MKTLPGIGVFGTGNTARVLISLLRA. The tract at residues 358–384 is disordered; that stretch reads GEWESVELTNDETDSNQNLSEVIQHNL. Positions 372-384 are enriched in polar residues; it reads SNQNLSEVIQHNL.

The protein belongs to the Gfo/Idh/MocA family.

It is found in the secreted. Its subcellular location is the extracellular space. The protein resides in the extracellular matrix. Functionally, promotes matrix assembly. This is Glucose-fructose oxidoreductase domain-containing protein 2 (gfod2) from Xenopus tropicalis (Western clawed frog).